The following is a 454-amino-acid chain: Phosphoglucosamine mutase (454 aa).

The active-site Phosphoserine intermediate is the Ser-101. Mg(2+) is bound by residues Ser-101, Asp-243, Asp-245, and Asp-247. Position 101 is a phosphoserine (Ser-101).

Belongs to the phosphohexose mutase family. The cofactor is Mg(2+). Post-translationally, activated by phosphorylation.

The enzyme catalyses alpha-D-glucosamine 1-phosphate = D-glucosamine 6-phosphate. Its function is as follows. Catalyzes the conversion of glucosamine-6-phosphate to glucosamine-1-phosphate. The sequence is that of Phosphoglucosamine mutase from Geobacter sp. (strain M21).